The primary structure comprises 1067 residues: MSSQNSFMSSKKDDKGKNIQVVVRCRPFNQLERKASSHSVLECDAPRKEVCVRTGGINDKLGKKTYTFDMVFGPAAKQIDVYRSVVCPILDEVIMGYNCTVFAYGQTGTGKTFTMEGERSADEEFTWEQDPLAGIIPRTLHQIFEKLSENGTEFSVKVSLLEIYNEELFDLLSPSPDVGERLQMFDDPRNKRGVIIKGLEEVSVHNKDEVYHILERGAARRKTASTLMNAYSSRSHSVFSVTIHMKETTVDGEELVKIGKLNLVDLAGSENIGRSGAVDKRAREAGNINQSLLTLGRVITALVERAPHIPYRESKLTRILQDSLGGRTKTSIIATVSPASINLEETVSTLEYANRAKNIMNKPEVNQKLTKRALIKEYTEEIERLKRDLATAREKNGVYLSNENYEQLQGKVLSQEEIITEYTEKITAMEEEIKRINELFAENKKELEECTTILQCKEKELEETQKNLHESKEQLAQEAFVVTALETTEKKLHGTANKLLTTVRETSKDVSGLHAKLDRKRAVDQHNTQVHENFAEQMDKRFSVIERSVDEYSVKQQGMLDFYTNSIDNLLGASSAALSVTATAVAKSFTSVQETVSEKVSHSVDEILKQETLSSQAKDDLQKLMAAHRTGLEQALRTDLLPVVTAVLNLNSHLSHCLQNFQAVADKIDSHKEEMNSFFTEHSRSLHRLRLDSGSALSSIQSEYESLKVEIETAQSMHSEGVNNLIGSLQNQLNLLAMETQQNFSGFLAKGGKLQKSVGCLQQDLDSISSDAIEHTSSHHDKFAGQSQDIAVEIRQLAASNMGTLEESSKQCEKLTGSINAISRESQHWCESASQQIDSLLEEQVCYLRTSKKHLQSLQKDVEVGCGASVVEITEHVNAQRQAEEKALTSLVEQVRDDKEMLGEQRLELHEQVQSGQNKVNSYLNEELRNDVPTGTTPQRRDYVYPSLLVRTKPRDVLLEQFRQQQQEYLESISSVISEAVEPPVEQDSLEDEPPVAVNDSVMSEKSCIDLSMVCQENGGVPFFQQKKALRKEKENRANTTLLERSKIMDEAEQSLPKSKLPLRMQN.

The 342-residue stretch at 18–359 (NIQVVVRCRP…LEYANRAKNI (342 aa)) folds into the Kinesin motor domain. 105–112 (GQTGTGKT) provides a ligand contact to ATP. The stretch at 365 to 480 (VNQKLTKRAL…SKEQLAQEAF (116 aa)) forms a coiled coil. Threonine 937 carries the post-translational modification Phosphothreonine; by CDK1. Serine 1046 carries the phosphoserine; by NEK6 modification. A disordered region spans residues 1048 to 1067 (IMDEAEQSLPKSKLPLRMQN).

The protein belongs to the TRAFAC class myosin-kinesin ATPase superfamily. Kinesin family. BimC subfamily. As to quaternary structure, heterotetramer of two heavy and two light chains. Interacts with aurka. Phosphorylation of Thr-937 during mitosis controls the association of this protein with the spindle apparatus. In terms of processing, a subset of this protein primarily localized at the spindle pole is phosphorylated by NEK6 during mitosis. Post-translationally, phosphorylated on a serine residue by aurka.

The protein localises to the cytoplasm. It localises to the cytoskeleton. Its subcellular location is the spindle pole. Functionally, plus end-directed motor protein required for establishing a bipolar spindle. Associates with both interphase and mitotic spindle microtubules. May be involved in nuclear divisions taking place during the development of unfertilized eggs. Required in non-mitotic cells for transport of secretory proteins from the Golgi complex to the cell surface. This chain is Kinesin-like protein KIF11, found in Xenopus tropicalis (Western clawed frog).